We begin with the raw amino-acid sequence, 315 residues long: Large ribosomal subunit protein uL29m (315 aa).

The protein belongs to the universal ribosomal protein uL29 family. In terms of assembly, component of the mitochondrial large ribosomal subunit. Mature mitochondrial ribosomes consist of a small (37S) and a large (54S) subunit. The 37S subunit contains at least 33 different proteins and 1 molecule of RNA (15S). The 54S subunit contains at least 45 different proteins and 1 molecule of RNA (21S).

The protein resides in the mitochondrion. This chain is Large ribosomal subunit protein uL29m (MRPL4), found in Candida glabrata (strain ATCC 2001 / BCRC 20586 / JCM 3761 / NBRC 0622 / NRRL Y-65 / CBS 138) (Yeast).